The chain runs to 251 residues: Triosephosphate isomerase (251 aa).

N10 and K12 together coordinate substrate. H96 (electrophile) is an active-site residue. E168 (proton acceptor) is an active-site residue.

The protein belongs to the triosephosphate isomerase family. Homodimer.

It carries out the reaction D-glyceraldehyde 3-phosphate = dihydroxyacetone phosphate. It functions in the pathway carbohydrate biosynthesis; gluconeogenesis. Its pathway is carbohydrate degradation; glycolysis; D-glyceraldehyde 3-phosphate from glycerone phosphate: step 1/1. This Aspergillus oryzae (strain ATCC 42149 / RIB 40) (Yellow koji mold) protein is Triosephosphate isomerase (tpiA).